We begin with the raw amino-acid sequence, 310 residues long: Methionyl-tRNA formyltransferase (310 aa).

Residue 111–114 coordinates (6S)-5,6,7,8-tetrahydrofolate; that stretch reads SLLP.

This sequence belongs to the Fmt family.

The enzyme catalyses L-methionyl-tRNA(fMet) + (6R)-10-formyltetrahydrofolate = N-formyl-L-methionyl-tRNA(fMet) + (6S)-5,6,7,8-tetrahydrofolate + H(+). Its function is as follows. Attaches a formyl group to the free amino group of methionyl-tRNA(fMet). The formyl group appears to play a dual role in the initiator identity of N-formylmethionyl-tRNA by promoting its recognition by IF2 and preventing the misappropriation of this tRNA by the elongation apparatus. This Nitrobacter hamburgensis (strain DSM 10229 / NCIMB 13809 / X14) protein is Methionyl-tRNA formyltransferase.